The sequence spans 343 residues: uncharacterized protein (343 aa).

A disordered region spans residues 66–89 (TQNPEPTSASTPPSASASSLPNGA). The segment covering 71-84 (PTSASTPPSASASS) has biased composition (low complexity). The chain crosses the membrane as a helical span at residues 96–116 (GVIAGPIVGVLGGLIVLVIIF). Disordered regions lie at residues 161-191 (GGYQ…NDTR) and 252-343 (GRPL…SEHF). Polar residues predominate over residues 165–188 (MHSTPWASSPRNSTIPQRSQSFYN). The segment covering 280–289 (SNDDSDETKL) has biased composition (basic and acidic residues). Low complexity predominate over residues 290–299 (KQSSTESSSE). Composition is skewed to basic and acidic residues over residues 301–311 (LDEKDKFDKNS) and 322–333 (SSYEHEISEEHK). The segment covering 334 to 343 (KHSKKRSEHF) has biased composition (basic residues).

The protein resides in the golgi apparatus membrane. This is an uncharacterized protein from Schizosaccharomyces pombe (strain 972 / ATCC 24843) (Fission yeast).